Consider the following 199-residue polypeptide: Small ribosomal subunit protein uS7 (199 aa).

It belongs to the universal ribosomal protein uS7 family. Part of the 30S ribosomal subunit.

Functionally, one of the primary rRNA binding proteins, it binds directly to 16S rRNA where it nucleates assembly of the head domain of the 30S subunit. Is located at the subunit interface close to the decoding center. This chain is Small ribosomal subunit protein uS7, found in Cenarchaeum symbiosum (strain A).